Consider the following 710-residue polypeptide: Polyribonucleotide nucleotidyltransferase (710 aa).

Residues Asp-489 and Asp-495 each contribute to the Mg(2+) site. The region spanning 556 to 615 (PKIDTIKIDVDKIKVVIGKGGETIDKIIAETGVKIDIDDEGNVSIYSSDQAAIDRTKEII) is the KH domain. In terms of domain architecture, S1 motif spans 625-693 (GEVYHAKVVR…EKGRVDASMK (69 aa)). Residues 691 to 710 (SMKALIPRPPKPEKKEEKHD) form a disordered region. Positions 700 to 710 (PKPEKKEEKHD) are enriched in basic and acidic residues.

The protein belongs to the polyribonucleotide nucleotidyltransferase family. It depends on Mg(2+) as a cofactor.

The protein resides in the cytoplasm. The catalysed reaction is RNA(n+1) + phosphate = RNA(n) + a ribonucleoside 5'-diphosphate. Involved in mRNA degradation. Catalyzes the phosphorolysis of single-stranded polyribonucleotides processively in the 3'- to 5'-direction. The sequence is that of Polyribonucleotide nucleotidyltransferase from Streptococcus pyogenes serotype M49 (strain NZ131).